The primary structure comprises 262 residues: tRNA pseudouridine synthase A (262 aa).

The active-site Nucleophile is the D51. Y109 is a substrate binding site.

Belongs to the tRNA pseudouridine synthase TruA family. In terms of assembly, homodimer.

The enzyme catalyses uridine(38/39/40) in tRNA = pseudouridine(38/39/40) in tRNA. Its function is as follows. Formation of pseudouridine at positions 38, 39 and 40 in the anticodon stem and loop of transfer RNAs. In Actinobacillus pleuropneumoniae serotype 3 (strain JL03), this protein is tRNA pseudouridine synthase A.